A 136-amino-acid chain; its full sequence is Putative LysR family substrate binding domain-containing protein YagP (136 aa).

Belongs to the LysR transcriptional regulatory family.

In Escherichia coli (strain K12), this protein is Putative LysR family substrate binding domain-containing protein YagP (yagP).